A 1309-amino-acid polypeptide reads, in one-letter code: Phospholipase A I (1309 aa).

4 LRR repeats span residues 155 to 178 (LPLL…IGKL), 180 to 201 (NLKI…LRQC), 203 to 223 (GLVE…DFRA), and 224 to 248 (MAGL…PLHQ). 3 ARM repeats span residues 315 to 356 (DEGN…SLAR), 401 to 439 (SVSQ…NLAF), and 440 to 481 (CLEN…ILGE). The PNPLA domain maps to 502–746 (LTMDGGGMKG…VANNPTIFAI (245 aa)). Positions 506–511 (GGGMKG) match the GXGXXG motif. Positions 538-542 (GTSTG) match the GXSXG motif. Residue Ser540 is the Nucleophile of the active site. The Proton acceptor role is filled by Asp733. The DGA/G motif lies at 733–735 (DGA). Positions 1183-1253 (VIGPSNEPQE…EDSDHEKTNR (71 aa)) are disordered. Positions 1188–1208 (NEPQETPLITSQGSSEYNIGD) are enriched in polar residues. Residues 1216-1235 (GEEEDEDEEVNEETEREEME) show a composition bias toward acidic residues.

It belongs to the patatin family.

The protein localises to the plastid. It localises to the chloroplast. Functionally, possesses non-specific lipolytic acyl hydrolase (LAH) activity. Catalyzes the hydrolysis of the galactolipids monogalactosyldiacylglycerol (MGDG) and digalactosyldiacylglycerol (DGDG), and less efficiently the phoshpolipids phosphatidylcholine (PC), phosphatidylethanolamine (PE), phosphatidylglycerol (PG), phosphatidylserine (PS) and phosphatidylinositol (PI). Hydrolyzes phospholipids at both the sn-1 and sn-2 positions. Involved in basal jasmonic acid production and promotes resistance to the necrotrophic fungal pathogen Botrytis cinerea. The protein is Phospholipase A I (PLA1) of Arabidopsis thaliana (Mouse-ear cress).